The chain runs to 725 residues: Beta-adducin (725 aa).

Residues 1–22 are disordered; that stretch reads MSEDTVPEAASPPPSQGQHYFD. Serine 11 and serine 25 each carry phosphoserine. A Phosphothreonine modification is found at threonine 55. Residues serine 60 and serine 344 each carry the phosphoserine modification. The segment at 425–444 is interaction with calmodulin; that stretch reads KQQKEKTRWLNTPNTYLRVN. The segment at 525 to 725 is disordered; sequence AEKSRSPSTE…KSKKKEKVES (201 aa). Phosphoserine is present on residues serine 530 and serine 532. Threonine 533 carries the phosphothreonine modification. The residue at position 535 (serine 535) is a Phosphoserine. Threonine 561 is modified (phosphothreonine). Basic and acidic residues predominate over residues 566-588; that stretch reads EEYKKEVERKKLEQEQEGEKDAA. 4 positions are modified to phosphoserine: serine 594, serine 598, serine 602, and serine 606. Residues 596–621 show a composition bias toward polar residues; it reads VKSTPASPVQSPTRAGTKSPAVSPSK. Threonine 612 carries the post-translational modification Phosphothreonine. Serine 614, serine 618, and serine 620 each carry phosphoserine. Basic and acidic residues-rich tracts occupy residues 622 to 631 and 639 to 654; these read ASEDAKKTEV and EPEK…KEEE. Threonine 674 is modified (phosphothreonine). Serine 678, serine 685, serine 688, serine 692, serine 696, serine 698, serine 700, serine 702, and serine 712 each carry phosphoserine. Residues 687–700 show a composition bias toward low complexity; it reads TSGPLSPEGSPSKS. The span at 701–725 shows a compositional bias: basic residues; the sequence is PSKKKKKFRTPSFLKKSKKKEKVES. An interaction with calmodulin region spans residues 703–720; it reads KKKKKFRTPSFLKKSKKK.

It belongs to the aldolase class II family. Adducin subfamily. As to quaternary structure, heterodimer of an alpha and a beta subunit. Found in a complex with ADD2, DMTN and SLC2A1. Interacts with SLC2A1. Found in liver, kidney, spleen, heart and brain.

It is found in the cytoplasm. It localises to the cytoskeleton. Its subcellular location is the cell membrane. Its function is as follows. Membrane-cytoskeleton-associated protein that promotes the assembly of the spectrin-actin network. Binds to the erythrocyte membrane receptor SLC2A1/GLUT1 and may therefore provide a link between the spectrin cytoskeleton to the plasma membrane. Binds to calmodulin. Calmodulin binds preferentially to the beta subunit. The polypeptide is Beta-adducin (Add2) (Rattus norvegicus (Rat)).